Here is a 675-residue protein sequence, read N- to C-terminus: Methionine--tRNA ligase (675 aa).

The 'HIGH' region motif lies at 15-25 (PYANGSIHLGH). 4 residues coordinate Zn(2+): Cys-146, Cys-149, Cys-159, and Cys-162. Positions 332-336 (KMSKS) match the 'KMSKS' region motif. Position 335 (Lys-335) interacts with ATP. A tRNA-binding domain is found at 573–675 (DFAKIDMRIA…SGAKPGHQVK (103 aa)).

This sequence belongs to the class-I aminoacyl-tRNA synthetase family. MetG type 1 subfamily. As to quaternary structure, homodimer. It depends on Zn(2+) as a cofactor.

It is found in the cytoplasm. The catalysed reaction is tRNA(Met) + L-methionine + ATP = L-methionyl-tRNA(Met) + AMP + diphosphate. Is required not only for elongation of protein synthesis but also for the initiation of all mRNA translation through initiator tRNA(fMet) aminoacylation. In Proteus mirabilis (strain HI4320), this protein is Methionine--tRNA ligase.